A 232-amino-acid polypeptide reads, in one-letter code: Demethylmenaquinone methyltransferase (232 aa).

Residues Thr-58, Asp-79, and 104–105 (NA) each bind S-adenosyl-L-methionine.

It belongs to the class I-like SAM-binding methyltransferase superfamily. MenG/UbiE family.

The catalysed reaction is a 2-demethylmenaquinol + S-adenosyl-L-methionine = a menaquinol + S-adenosyl-L-homocysteine + H(+). Its pathway is quinol/quinone metabolism; menaquinone biosynthesis; menaquinol from 1,4-dihydroxy-2-naphthoate: step 2/2. Methyltransferase required for the conversion of demethylmenaquinol (DMKH2) to menaquinol (MKH2). The chain is Demethylmenaquinone methyltransferase from Bacillus licheniformis (strain ATCC 14580 / DSM 13 / JCM 2505 / CCUG 7422 / NBRC 12200 / NCIMB 9375 / NCTC 10341 / NRRL NRS-1264 / Gibson 46).